Here is a 251-residue protein sequence, read N- to C-terminus: MAKAAVTKRHHFMIQKLLILLSYGYTNGLDDAHSLRCNLTIKDPTSADLPWCDVKCSVDEITILHLNNINKTMTSGDPGKMANATGKCLTQPLNDLCQELRDKVSNTKVDTHKTNGYPHLQVTMIYPQSQGQTPSATWEFNISDSYFFTFYTENMSWRSANDESGVIMNKWKDDGDLVQQLKYFIPQCRQKIDEFLKQSKEKPRSTSRSPSITQLTSTSPLPPPSHSTSKKGFISVGLIFISLLFAFAFAM.

The first 28 residues, 1-28 (MAKAAVTKRHHFMIQKLLILLSYGYTNG), serve as a signal peptide directing secretion. The cysteines at positions 37 and 56 are disulfide-linked. Residues N38, N70, N83, N141, and N154 are each glycosylated (N-linked (GlcNAc...) asparagine). A disulfide bond links C88 and C188. A disordered region spans residues 196 to 228 (LKQSKEKPRSTSRSPSITQLTSTSPLPPPSHST). A compositionally biased stretch (low complexity) spans 209 to 219 (SPSITQLTSTS). A lipid anchor (GPI-anchor amidated serine) is attached at S225. Positions 226–251 (HSTSKKGFISVGLIFISLLFAFAFAM) are cleaved as a propeptide — removed in mature form.

The protein belongs to the NKG2D ligand family. Glycosylated.

The protein resides in the cell membrane. Its function is as follows. Acts as a ligand for KLRK1. This is Retinoic acid early-inducible protein 1-epsilon (Raet1e) from Mus musculus (Mouse).